Reading from the N-terminus, the 366-residue chain is Peptide chain release factor 1 (366 aa).

N5-methylglutamine is present on Gln239.

It belongs to the prokaryotic/mitochondrial release factor family. Methylated by PrmC. Methylation increases the termination efficiency of RF1.

It is found in the cytoplasm. Peptide chain release factor 1 directs the termination of translation in response to the peptide chain termination codons UAG and UAA. The protein is Peptide chain release factor 1 of Albidiferax ferrireducens (strain ATCC BAA-621 / DSM 15236 / T118) (Rhodoferax ferrireducens).